The primary structure comprises 312 residues: tRNA uridine(34) hydroxylase (312 aa).

Residues 124-218 form the Rhodanese domain; it reads SDPEVLLIDT…YLEEVPQEQT (95 aa). The active-site Cysteine persulfide intermediate is Cys178. Basic and acidic residues-rich tracts occupy residues 279 to 294 and 302 to 312; these read TRES…ELAR and IGRDPRQLNEA. The disordered stretch occupies residues 279–312; the sequence is TRESARERQKQIELARARNQPHPIGRDPRQLNEA.

Belongs to the TrhO family.

It catalyses the reaction uridine(34) in tRNA + AH2 + O2 = 5-hydroxyuridine(34) in tRNA + A + H2O. Catalyzes oxygen-dependent 5-hydroxyuridine (ho5U) modification at position 34 in tRNAs. The chain is tRNA uridine(34) hydroxylase from Ectopseudomonas mendocina (strain ymp) (Pseudomonas mendocina).